The chain runs to 229 residues: Sperm flagellar protein 1 (229 aa).

The region spanning 7–115 (EETMQELYTW…TLRQKIEEKQ (109 aa)) is the Calponin-homology (CH) domain. Positions 122–169 (ADLSQDQATQNNGNTHSDKGYKSNGTELSPRQGARVDPASKTHQGYAQ) are disordered. Polar residues predominate over residues 123–136 (DLSQDQATQNNGNT). An essential for homodimerization and microtubule bundling activity region spans residues 178–229 (RFQLAEKEQTLILSQETIQILQAKLRRLEQLLLLKNVRIDDLTRRLQELEKK).

Homodimer.

The protein resides in the cytoplasm. Its subcellular location is the cytoskeleton. It localises to the cilium axoneme. It is found in the apical cell membrane. Its function is as follows. Microtubule-associated protein involved in the stabilization of microtubules along the axis of migration during radial intercalation. Promotes the establishment and stabilization of an axis of microtubules required for the active migration of cells into the outer epithelium. Microtubule-associated protein that promotes microtubule bundling and stabilizes microtubules against depolymerization in response to cold shock. Essential for ciliary central apparatus formation which requires both its microtubule-binding and bundling activities. Regulates planar cell polarity signaling pathway and asymmetric microtubule accumulation in ciliated epithelia. The chain is Sperm flagellar protein 1 from Xenopus laevis (African clawed frog).